The primary structure comprises 216 residues: GTP cyclohydrolase-2 (216 aa).

51-55 (RIHSE) lines the GTP pocket. Residues Cys-56, Cys-67, and Cys-69 each coordinate Zn(2+). GTP is bound by residues Gln-72, 94–96 (EGR), and Thr-116. The active-site Proton acceptor is Asp-128. The Nucleophile role is filled by Arg-130. Residues Thr-151 and Lys-156 each contribute to the GTP site.

The protein belongs to the GTP cyclohydrolase II family. Requires Zn(2+) as cofactor.

The enzyme catalyses GTP + 4 H2O = 2,5-diamino-6-hydroxy-4-(5-phosphoribosylamino)-pyrimidine + formate + 2 phosphate + 3 H(+). It participates in cofactor biosynthesis; riboflavin biosynthesis; 5-amino-6-(D-ribitylamino)uracil from GTP: step 1/4. Catalyzes the conversion of GTP to 2,5-diamino-6-ribosylamino-4(3H)-pyrimidinone 5'-phosphate (DARP), formate and pyrophosphate. The protein is GTP cyclohydrolase-2 of Haemophilus influenzae (strain PittEE).